Reading from the N-terminus, the 2025-residue chain is E3 ubiquitin-protein ligase TRIP12 (2025 aa).

A compositionally biased stretch (polar residues) spans 1 to 10 (MSNRPNNNPG). Residues 1-404 (MSNRPNNNPG…SGESESDDSE (404 aa)) are disordered. Serine 2 carries the N-acetylserine modification. At serine 12 the chain carries Phosphoserine. A compositionally biased stretch (polar residues) spans 18-27 (RNTAGAQPQD). Positions 48-70 (DPDRANTSERQKTGQVPKKDNSR) are enriched in basic and acidic residues. Phosphoserine occurs at positions 77, 85, and 100. Polar residues-rich tracts occupy residues 78-88 (PDYNRTNSPSS), 99-108 (ESLSETNKPP), and 119-132 (EQQL…STSK). Composition is skewed to low complexity over residues 154–166 (SSCV…SEST) and 175–216 (PTKL…SSTV). An N6-acetyllysine modification is found at lysine 181. Residues 280–290 (PGSSKSETSKP) show a composition bias toward polar residues. Residues serine 310 and serine 312 each carry the phosphoserine modification. Residues 326-338 (QKTTGSCASTSRR) are compositionally biased toward polar residues. Residues 346 to 358 (GAAEARRQEKMAD) are compositionally biased toward basic and acidic residues. Polar residues predominate over residues 362-371 (NQETVNSSAA). Residues 379 to 397 (GAAASSSVAGAVGMTTSGE) show a composition bias toward low complexity. The WWE domain maps to 755 to 869 (MLKKGNAQNT…DPELAKSFIK (115 aa)). The disordered stretch occupies residues 970–1077 (ESLLTSPPKA…QSPKSSFLAS (108 aa)). Residue serine 975 is modified to Phosphoserine. Positions 983–1006 (GSGSLGSTTPASSGTATAATNASA) are enriched in low complexity. 2 positions are modified to phosphoserine: serine 1024 and serine 1030. The segment covering 1034–1047 (KRKRLPKRGPRRPK) has biased composition (basic residues). Residue serine 1049 is modified to Phosphoserine. The span at 1050 to 1059 (PPRDDDKVDN) shows a compositional bias: basic and acidic residues. A compositionally biased stretch (low complexity) spans 1062–1073 (KSPTTTQSPKSS). Phosphoserine occurs at positions 1063, 1350, 1355, 1362, and 1409. Threonine 1410 is modified (phosphothreonine). 2 disordered regions span residues 1440–1466 (SSKD…NAKK) and 1601–1620 (TNPE…PRLD). Lysine 1458 bears the N6-acetyllysine mark. Serine 1460 carries the phosphoserine modification. The tract at residues 1529 to 1603 (EIIPTSEFIN…AMQRLLDTNP (75 aa)) is K-box. The HECT domain maps to 1918–2025 (PDHGYTHDSR…REGQQSFHLS (108 aa)). Residue cysteine 1992 is the Glycyl thioester intermediate of the active site.

This sequence belongs to the UPL family. K-HECT subfamily. Interacts with MYC; leading to disrupt interaction with isoform p19ARF/ARF of CDKN2A. Interacts with TRADD; leading to disrupt interaction with isoform p19ARF/ARF of CDKN2A. Interacts with SMARCC1; leading to disrupt interaction with SMARCE1.

The protein localises to the nucleus. It localises to the nucleoplasm. The enzyme catalyses S-ubiquitinyl-[E2 ubiquitin-conjugating enzyme]-L-cysteine + [acceptor protein]-L-lysine = [E2 ubiquitin-conjugating enzyme]-L-cysteine + N(6)-ubiquitinyl-[acceptor protein]-L-lysine.. Its pathway is protein modification; protein ubiquitination. E3 ubiquitin-protein ligase involved in ubiquitin fusion degradation (UFD) pathway and regulation of DNA repair. Part of the ubiquitin fusion degradation (UFD) pathway, a process that mediates ubiquitination of protein at their N-terminus, regardless of the presence of lysine residues in target proteins. Acts as a key regulator of DNA damage response by acting as a suppressor of RNF168, an E3 ubiquitin-protein ligase that promotes accumulation of 'Lys-63'-linked histone H2A and H2AX at DNA damage sites, thereby acting as a guard against excessive spreading of ubiquitinated chromatin at damaged chromosomes. In normal cells, mediates ubiquitination and degradation of isoform p19ARF/ARF of CDKN2A, a lysine-less tumor suppressor required for p53/TP53 activation under oncogenic stress. In cancer cells, however, isoform p19ARF/ARF and TRIP12 are located in different cell compartments, preventing isoform p19ARF/ARF ubiquitination and degradation. Does not mediate ubiquitination of isoform p16-INK4a of CDKN2A. Also catalyzes ubiquitination of NAE1 and SMARCE1, leading to their degradation. Ubiquitination and degradation of target proteins is regulated by interaction with proteins such as MYC, TRADD or SMARCC1, which disrupt the interaction between TRIP12 and target proteins. Mediates ubiquitination of ASXL1: following binding to N(6)-methyladenosine methylated DNA, ASXL1 is ubiquitinated by TRIP12, leading to its degradation and subsequent inactivation of the PR-DUB complex. This chain is E3 ubiquitin-protein ligase TRIP12 (Trip12), found in Rattus norvegicus (Rat).